Consider the following 376-residue polypeptide: Cytoplasmic tRNA 2-thiolation protein 1 (376 aa).

The protein belongs to the TtcA family. CTU1/NCS6/ATPBD3 subfamily.

The protein resides in the cytoplasm. It participates in tRNA modification; 5-methoxycarbonylmethyl-2-thiouridine-tRNA biosynthesis. In terms of biological role, plays a central role in 2-thiolation of mcm(5)S(2)U at tRNA wobble positions of tRNA(Lys), tRNA(Glu) and tRNA(Gln). Directly binds tRNAs and probably acts by catalyzing adenylation of tRNAs, an intermediate required for 2-thiolation. It is unclear whether it acts as a sulfurtransferase that transfers sulfur from thiocarboxylated URM1 onto the uridine of tRNAs at wobble position. Prior mcm(5) tRNA modification by the elongator complex is required for 2-thiolation. May also be involved in protein urmylation. The protein is Cytoplasmic tRNA 2-thiolation protein 1 of Scheffersomyces stipitis (strain ATCC 58785 / CBS 6054 / NBRC 10063 / NRRL Y-11545) (Yeast).